Consider the following 115-residue polypeptide: Ribonuclease P protein component (115 aa).

It belongs to the RnpA family. In terms of assembly, consists of a catalytic RNA component (M1 or rnpB) and a protein subunit.

It catalyses the reaction Endonucleolytic cleavage of RNA, removing 5'-extranucleotides from tRNA precursor.. Functionally, RNaseP catalyzes the removal of the 5'-leader sequence from pre-tRNA to produce the mature 5'-terminus. It can also cleave other RNA substrates such as 4.5S RNA. The protein component plays an auxiliary but essential role in vivo by binding to the 5'-leader sequence and broadening the substrate specificity of the ribozyme. This Bacillus mycoides (strain KBAB4) (Bacillus weihenstephanensis) protein is Ribonuclease P protein component.